Here is a 1412-residue protein sequence, read N- to C-terminus: Ecdysone-induced protein 75B, isoform B (1412 aa).

Over residues 1–14 (MEAVQAAAAATSSG) the composition is skewed to low complexity. Disordered regions lie at residues 1-96 (MEAV…PGGT), 110-204 (QRAT…QQHV), 258-298 (QYQQ…VPPP), and 321-448 (HFQQ…SIPD). Positions 15 to 25 (GSSGSVPGSGS) are enriched in gly residues. Basic and acidic residues predominate over residues 32 to 57 (IKTEPIDFEMLHLEENERQQDIEREP). Residues 58 to 68 (SSSNSNSNSNS) show a composition bias toward low complexity. Over residues 69–81 (LTPQRYTHVQVQT) the composition is skewed to polar residues. Over residues 87–96 (PTGLTTPGGT) the composition is skewed to low complexity. Polar residues predominate over residues 124–133 (YSQQQGTAAS). The segment covering 135–150 (SAPPETTALLTTTSGT) has biased composition (low complexity). Polar residues predominate over residues 151 to 164 (PQIIITRTLPSNQH). Low complexity predominate over residues 177–203 (HHYQQQQPQRQQSPPPLHHQQQQQQQH). Positions 266-284 (PLAPPPPPPPPPPPPPPPQ) are enriched in pro residues. 3 stretches are compositionally biased toward low complexity: residues 323 to 371 (QQQQ…SSHI), 378 to 403 (SSSS…NSVM), and 417 to 447 (ASSS…SSIP). Residues 455 to 531 (TVLCRVCGDK…VGMSRDAVRF (77 aa)) constitute a DNA-binding region (nuclear receptor). 2 consecutive NR C4-type zinc fingers follow at residues 458–478 (CRVC…CEGC) and 495–514 (CTKN…CQYC). The NR LBD domain maps to 565–813 (DQPRLLAAVL…QQMWSMEDGN (249 aa)). 6 disordered regions span residues 837–878 (KSPL…SALA), 984–1021 (LDSP…SVDD), 1044–1064 (VSVS…KRQI), 1108–1174 (AEAD…SSHS), 1204–1317 (ENST…SNSA), and 1368–1401 (VTVT…NPGL). Low complexity-rich tracts occupy residues 854-866 (GSPS…GVSL), 1005-1017 (SSGG…SPRS), 1044-1058 (VSVS…STSS), 1110-1155 (ADAS…AQSQ), and 1163-1174 (SSPKASMASSHS). Polar residues-rich tracts occupy residues 1206–1219 (STAA…VGNR) and 1231–1253 (AVQN…QRQQ). 3 stretches are compositionally biased toward low complexity: residues 1254 to 1290 (SVSP…SASS), 1299 to 1317 (STSN…SNSA), and 1372 to 1400 (ASNG…PNPG).

The protein belongs to the nuclear hormone receptor family. NR1 subfamily.

It localises to the nucleus. Its function is as follows. Implicated in the regulation of ecdysone-triggered gene hierarchies. Probably plays a key role in mediating the regulation of the larval molt by 20-OH-ecdysone. The chain is Ecdysone-induced protein 75B, isoform B (Eip75B) from Drosophila melanogaster (Fruit fly).